Here is a 334-residue protein sequence, read N- to C-terminus: MQLDNILSQLFENQALTKAESQYFFEQVIQGNVSNEQLAGALIALKVRGETIEEIAGAVEAAFANATTFPTPDYDFADIVGTGGDGQNTINISTASAIVAATLGYKVAKHGSRSVSSKTGASDVLSALGINVAISPQTARQALDENNLCFLFAPLYHAGFKHAVPVRQTLKTRTLFNILGPLVNPAHAKRQLLGVYSPEVLKIYAETVRTLNHQHSIVVYGSGLDEVAVHGETLVAEIEDDKIHYFSLIPEDFGVQRHSIEALRGGEPTENAEKITVLLQGKGEAAHIDAVAVNTAMLMRTFGERNLKANVQRVKDLLRTDKAYQTLQKLAQYQ.

5-phospho-alpha-D-ribose 1-diphosphate-binding positions include Gly81, 84–85, Thr89, 91–94, 109–117, and Ala121; these read GD, NIST, and KHGSRSVSS. Gly81 contacts anthranilate. Ser93 contributes to the Mg(2+) binding site. Residue Arg167 coordinates anthranilate. Mg(2+) contacts are provided by Asp225 and Glu226.

It belongs to the anthranilate phosphoribosyltransferase family. Homodimer. The cofactor is Mg(2+).

The enzyme catalyses N-(5-phospho-beta-D-ribosyl)anthranilate + diphosphate = 5-phospho-alpha-D-ribose 1-diphosphate + anthranilate. The protein operates within amino-acid biosynthesis; L-tryptophan biosynthesis; L-tryptophan from chorismate: step 2/5. Its function is as follows. Catalyzes the transfer of the phosphoribosyl group of 5-phosphorylribose-1-pyrophosphate (PRPP) to anthranilate to yield N-(5'-phosphoribosyl)-anthranilate (PRA). The chain is Anthranilate phosphoribosyltransferase from Actinobacillus pleuropneumoniae serotype 5b (strain L20).